We begin with the raw amino-acid sequence, 313 residues long: GTP cyclohydrolase 1 (313 aa).

The span at 1-10 (MAQETTRDGS) shows a compositional bias: basic and acidic residues. The disordered stretch occupies residues 1–120 (MAQETTRDGS…SRGTRERLEE (120 aa)). The span at 11–20 (DSPSGSVSPP) shows a compositional bias: low complexity. Over residues 29 to 39 (KDKKSSKKRAH) the composition is skewed to basic residues. The span at 40 to 64 (SSGERRSSVSKPARDPSDKPEESPS) shows a compositional bias: basic and acidic residues. The segment covering 72–102 (TSSTAAAAVPSTITEEVSPSTSVTRSPSPVI) has biased composition (low complexity). Residues Cys-202, His-205, and Cys-273 each coordinate Zn(2+).

This sequence belongs to the GTP cyclohydrolase I family. In terms of assembly, toroid-shaped homodecamer, composed of two pentamers of five dimers.

It carries out the reaction GTP + H2O = 7,8-dihydroneopterin 3'-triphosphate + formate + H(+). It functions in the pathway cofactor biosynthesis; 7,8-dihydroneopterin triphosphate biosynthesis; 7,8-dihydroneopterin triphosphate from GTP: step 1/1. With respect to regulation, GTP shows a positive allosteric effect, and tetrahydrobiopterin inhibits the enzyme activity. GTP cyclohydrolase 1 is the first enzyme in the biosynthetic pathway leading to folic acid. The chain is GTP cyclohydrolase 1 (gch-1) from Neurospora crassa (strain ATCC 24698 / 74-OR23-1A / CBS 708.71 / DSM 1257 / FGSC 987).